We begin with the raw amino-acid sequence, 502 residues long: DnaJ homolog subfamily C member 3 homolog (502 aa).

The N-terminal stretch at 1 to 25 is a signal peptide; it reads MIVNKKYFLLICIIILISINCLVLA. 8 TPR repeats span residues 29 to 62, 69 to 102, 103 to 136, 184 to 217, 218 to 251, 264 to 297, 302 to 335, and 336 to 369; these read IENF…IGSD, VSLL…NPDN, IHAR…RPDN, KEVR…EPSS, VAAL…DPDN, FEKS…EPNS, TPLY…DELN, and ADAL…KPND. Asn51 carries N-linked (GlcNAc...) asparagine glycosylation. A disulfide bridge links Cys309 with Cys325. The region spanning 390–457 is the J domain; the sequence is DYYKILGIQK…EKRKRYDMGE (68 aa).

It localises to the secreted. It is found in the endoplasmic reticulum lumen. Functionally, may be involved in the unfolded protein response (UPR) during ER stress. The sequence is that of DnaJ homolog subfamily C member 3 homolog (dnajc3) from Dictyostelium discoideum (Social amoeba).